Reading from the N-terminus, the 97-residue chain is MEIKKTALAGTTESSDIQITLSKGNDGIDVDLTSDVKKQFGDQIVKVITDTLNKFQITNAKVRAVDKGALDCVIKARTITAASRALNQEDQINWEVL.

Ser-14 is subject to O-(phosphoribosyl dephospho-coenzyme A)serine.

The protein belongs to the CitD family. As to quaternary structure, oligomer with a subunit composition of (alpha,beta,gamma)6.

Its subcellular location is the cytoplasm. In terms of biological role, covalent carrier of the coenzyme of citrate lyase. This Oenococcus oeni (strain ATCC BAA-331 / PSU-1) protein is Citrate lyase acyl carrier protein.